A 60-amino-acid chain; its full sequence is Large ribosomal subunit protein uL30 (60 aa).

This sequence belongs to the universal ribosomal protein uL30 family. In terms of assembly, part of the 50S ribosomal subunit.

This is Large ribosomal subunit protein uL30 from Shewanella denitrificans (strain OS217 / ATCC BAA-1090 / DSM 15013).